Consider the following 502-residue polypeptide: Probable ADP-dependent glucokinase (502 aa).

Positions 1 to 32 are cleaved as a signal peptide; sequence MFSETFVPSIFSYKHRLLHLSVLFFIVPYWYS. The region spanning 44-497 is the ADPK domain; it reads SVETAMFLSW…LLYSQFYRLN (454 aa). Residues asparagine 89 and asparagine 190 are each glycosylated (N-linked (GlcNAc...) asparagine). Mg(2+) is bound by residues glutamate 290, glutamate 320, and aspartate 481. The Proton acceptor role is filled by aspartate 481.

This sequence belongs to the ADP-dependent glucokinase family. In terms of assembly, monomer. The cofactor is Mg(2+).

Its subcellular location is the secreted. The catalysed reaction is D-glucose + ADP = D-glucose 6-phosphate + AMP + H(+). It functions in the pathway carbohydrate degradation; glycolysis. In terms of biological role, catalyzes the phosphorylation of D-glucose to D-glucose 6-phosphate using ADP as the phosphate donor. GDP and CDP can replace ADP, but with reduced efficiency. This chain is Probable ADP-dependent glucokinase, found in Caenorhabditis elegans.